A 161-amino-acid chain; its full sequence is Small ribosomal subunit protein uS19 (161 aa).

The segment covering 1–19 has biased composition (basic residues); it reads MARQKKYSGKGGARKKNKQ. Residues 1-26 form a disordered region; that stretch reads MARQKKYSGKGGARKKNKQKQNVAPR.

The protein belongs to the universal ribosomal protein uS19 family.

Protein S19 forms a complex with S13 that binds strongly to the 16S ribosomal RNA. This chain is Small ribosomal subunit protein uS19, found in Methanococcus maripaludis (strain DSM 14266 / JCM 13030 / NBRC 101832 / S2 / LL).